Here is a 185-residue protein sequence, read N- to C-terminus: Thymidine kinase (185 aa).

17-24 (GPMFAGKT) lines the ATP pocket. E92 functions as the Proton acceptor in the catalytic mechanism. F121 contacts substrate. The Zn(2+) site is built by C146 and C149. 166–170 (LILAG) is a substrate binding site. Zn(2+)-binding residues include C179 and C182.

It belongs to the thymidine kinase family.

It carries out the reaction thymidine + ATP = dTMP + ADP + H(+). Functionally, phosphorylates thymidine. ASFV replicates in the cytoplasm of infected cells and contains genes encoding a number of enzymes needed for DNA synthesis, including thymidine kinase. Important for growth in swine macrophages in vitro and is a virus virulence factor in swine. The chain is Thymidine kinase from African swine fever virus (isolate Pig/Kenya/KEN-50/1950) (ASFV).